Consider the following 103-residue polypeptide: Heme-copper oxidase subunit 4 (103 aa).

3 helical membrane passes run 20–40 (VWIV…EGIA), 42–62 (NPFV…ALFF), and 75–95 (ITVS…TSVL).

The protein localises to the cell membrane. The sequence is that of Heme-copper oxidase subunit 4 (aoxC) from Aeropyrum pernix (strain ATCC 700893 / DSM 11879 / JCM 9820 / NBRC 100138 / K1).